The chain runs to 451 residues: Serine/threonine-protein kinase VRK3 (451 aa).

Disordered regions lie at residues 28 to 61 (KHEG…SKKV) and 74 to 125 (LPSE…MTAS). Residues 32–45 (SQSFVKPFTSSSQG) show a composition bias toward polar residues. A Nuclear localization signal motif is present at residues 47–62 (RRKTNTSSETSSKKVK). Phosphoserine occurs at positions 53, 57, 80, 81, 88, and 106. The segment covering 78–91 (GKSSGSEDTLSTSG) has biased composition (polar residues). Over residues 98–116 (SRSPTPRSSPQTTRQSPQT) the composition is skewed to low complexity. The Protein kinase domain maps to 123-434 (TASLEALPVG…TLRNELEALL (312 aa)).

The protein belongs to the protein kinase superfamily. CK1 Ser/Thr protein kinase family. VRK subfamily. Interacts with DUSP3. Interacts with RAN. Interacts with HSP70/HSPA1A. Post-translationally, phosphorylated at Ser-106 by CDK5; leading to protection of the cell against H2O2-induced apoptosis. In terms of processing, ubiquitinated by RNF144A.

It is found in the nucleus. The protein resides in the cytoplasm. The catalysed reaction is L-seryl-[protein] + ATP = O-phospho-L-seryl-[protein] + ADP + H(+). Its function is as follows. Plays a role in the regulation of the cell cycle by phosphorylating the nuclear envelope protein barrier-to-autointegration factor/BAF that is required for disassembly and reassembly, respectively, of the nuclear envelope during mitosis. Under normal physiological conditions, negatively regulates ERK activity along with VHR phosphatase in the nucleus, causing timely and transient action of ERK. Stress conditions activate CDK5 which phosphorylates VRK3 to increase VHR phosphatase activity and suppress prolonged ERK activation that causes cell death. For example, upon glutamate induction, promotes nuclear localization of HSP70/HSPA1A to inhibit ERK activation via VHR phosphatase. This Bos taurus (Bovine) protein is Serine/threonine-protein kinase VRK3 (VRK3).